Reading from the N-terminus, the 263-residue chain is Versicolorin reductase 1 (263 aa).

Ile-22, Asp-68, Asn-95, and Arg-128 together coordinate NADP(+). Active-site proton donor residues include Ser-144 and Ser-145. NADP(+)-binding residues include Tyr-159, Lys-163, Ile-192, and Thr-194. Tyr-159 serves as the catalytic Proton acceptor. Lys-163 (lowers pKa of active site Tyr) is an active-site residue.

It belongs to the short-chain dehydrogenases/reductases (SDR) family.

The protein localises to the cytoplasm. The protein resides in the cytosol. It functions in the pathway mycotoxin biosynthesis. Versicolorin reductase; part of the fragmented gene cluster that mediates the biosynthesis of dothistromin (DOTH), a polyketide toxin very similar in structure to the aflatoxin precursor, versicolorin B. The first step of the pathway is the conversion of acetate to norsolorinic acid (NOR) and requires the fatty acid synthase subunits hexA and hexB, as well as the polyketide synthase pksA. PksA combines a hexanoyl starter unit and 7 malonyl-CoA extender units to synthesize the precursor NOR. The hexanoyl starter unit is provided to the acyl-carrier protein (ACP) domain by the fungal fatty acid synthase hexA/hexB. The second step is the conversion of NOR to averantin (AVN) and requires the norsolorinic acid ketoreductase nor1, which catalyzes the dehydration of norsolorinic acid to form (1'S)-averantin. The cytochrome P450 monooxygenase avnA then catalyzes the hydroxylation of AVN to 5'hydroxyaverantin (HAVN). The next step is performed by adhA that transforms HAVN to averufin (AVF). Averufin might then be converted to hydroxyversicolorone by cypX and avfA. Hydroxyversicolorone is further converted versiconal hemiacetal acetate (VHA) by moxY. VHA is then the substrate for the versiconal hemiacetal acetate esterase est1 to yield versiconal (VAL). Versicolorin B synthase vbsA then converts VAL to versicolorin B (VERB) by closing the bisfuran ring. Then, the activity of the versicolorin B desaturase verB leads to versicolorin A (VERA). DotB, a predicted chloroperoxidase, may perform epoxidation of the A-ring of VERA. Alternatively, a cytochrome P450, such as cypX or avnA could catalyze this step. It is also possible that another, uncharacterized, cytochrome P450 enzyme is responsible for this step. Opening of the epoxide could potentially be achieved by the epoxide hydrolase epoA. However, epoA seems not to be required for DOTH biosynthesis, but other epoxide hydrolases may have the ability to complement this hydrolysis. Alternatively, opening of the epoxide ring could be achieved non-enzymatically. The next step is the deoxygenation of ring A to yield the 5,8-dihydroxyanthraquinone which is most likely catalyzed by the NADPH dehydrogenase encoded by ver1. The last stages of DOTH biosynthesis are proposed to involve hydroxylation of the bisfuran. OrdB and norB might have oxidative roles here. An alternative possibility is that cytochrome P450 monoogenases such as avnA and cypX might perform these steps in addition to previously proposed steps. The chain is Versicolorin reductase 1 from Dothistroma septosporum (Red band needle blight fungus).